Reading from the N-terminus, the 156-residue chain is Small ribosomal subunit protein uS7 (156 aa).

It belongs to the universal ribosomal protein uS7 family. Part of the 30S ribosomal subunit. Contacts proteins S9 and S11.

In terms of biological role, one of the primary rRNA binding proteins, it binds directly to 16S rRNA where it nucleates assembly of the head domain of the 30S subunit. Is located at the subunit interface close to the decoding center, probably blocks exit of the E-site tRNA. The polypeptide is Small ribosomal subunit protein uS7 (Brucella anthropi (strain ATCC 49188 / DSM 6882 / CCUG 24695 / JCM 21032 / LMG 3331 / NBRC 15819 / NCTC 12168 / Alc 37) (Ochrobactrum anthropi)).